The chain runs to 812 residues: Probable beta-glucosidase D (812 aa).

An N-terminal signal peptide occupies residues 1–18; the sequence is MRVPSLSVLSFLLGTALA. N-linked (GlcNAc...) asparagine glycans are attached at residues N53 and N188. Residues 186-248 are disordered; the sequence is ETNRTGGMGG…GMGGGMAGSS (63 aa). Positions 191–207 are enriched in gly residues; sequence GGMGGGGGAPGGGGMGR. Over residues 211–225 the composition is skewed to polar residues; that stretch reads FSSSVPGGMSPTSSA. Over residues 236-245 the composition is skewed to gly residues; that stretch reads GGSGMGGGMA. N-linked (GlcNAc...) asparagine glycosylation is present at N296. D324 is an active-site residue. 6 N-linked (GlcNAc...) asparagine glycosylation sites follow: N360, N384, N422, N501, N592, and N646.

This sequence belongs to the glycosyl hydrolase 3 family.

The protein resides in the secreted. It carries out the reaction Hydrolysis of terminal, non-reducing beta-D-glucosyl residues with release of beta-D-glucose.. Its pathway is glycan metabolism; cellulose degradation. Functionally, beta-glucosidases are one of a number of cellulolytic enzymes involved in the degradation of cellulosic biomass. Catalyzes the last step releasing glucose from the inhibitory cellobiose. This chain is Probable beta-glucosidase D (bglD), found in Emericella nidulans (strain FGSC A4 / ATCC 38163 / CBS 112.46 / NRRL 194 / M139) (Aspergillus nidulans).